A 574-amino-acid chain; its full sequence is Streptolysin O (574 aa).

Positions 1-36 (MKDMSNKKIFKKYSRVAGLLTAALIVGNLVTANADS) are cleaved as a signal peptide. Positions 37 to 52 (NKQNTANTETTTTNEQ) are enriched in low complexity. Disordered stretches follow at residues 37-64 (NKQNTANTETTTTNEQPKPESSELTTEK) and 84-111 (KEMPLESAEKEEKKSEDNKKSEEDHTEE). Residues 53 to 64 (PKPESSELTTEK) are compositionally biased toward basic and acidic residues. 4 beta stranded membrane passes run 263–276 (KSQIEAALNVNSKI), 283–292 (IDFKSISKGE), 361–370 (SNDVEAAFSA), and 378–390 (KTNGKYSDILENS). The Conserved undecapeptide motif lies at 532 to 542 (ECTGLAWEWWR). A Cholesterol binding motif is present at residues 564 to 565 (TL).

Belongs to the cholesterol-dependent cytolysin family. In terms of assembly, homooligomeric pore complex of 35 to 50 subunits; when inserted in the host membrane.

The protein localises to the secreted. Its subcellular location is the host cell membrane. Its function is as follows. A cholesterol-dependent toxin that causes cytolysis by forming pores in cholesterol containing host membranes. After binding to target membranes, the protein undergoes a major conformation change, leading to its insertion in the host membrane and formation of an oligomeric pore complex. Cholesterol is required for binding to host membranes, membrane insertion and pore formation; cholesterol binding is mediated by a Thr-Leu pair in the C-terminus. Can be reversibly inactivated by oxidation. The protein is Streptolysin O (slo) of Streptococcus canis.